We begin with the raw amino-acid sequence, 1245 residues long: ATP-dependent helicase/nuclease subunit A (1245 aa).

The UvrD-like helicase ATP-binding domain occupies 4-477 (TKWTDEQLSA…IQLYKNFRSR (474 aa)). Residue 25 to 32 (AAAGSGKT) coordinates ATP. The region spanning 517–815 (KFKDTIVGGP…RIMSIHKSKG (299 aa)) is the UvrD-like helicase C-terminal domain.

This sequence belongs to the helicase family. AddA subfamily. Heterodimer of AddA and AddB/RexB. Requires Mg(2+) as cofactor.

The catalysed reaction is Couples ATP hydrolysis with the unwinding of duplex DNA by translocating in the 3'-5' direction.. It carries out the reaction ATP + H2O = ADP + phosphate + H(+). In terms of biological role, the heterodimer acts as both an ATP-dependent DNA helicase and an ATP-dependent, dual-direction single-stranded exonuclease. Recognizes the chi site generating a DNA molecule suitable for the initiation of homologous recombination. The AddA nuclease domain is required for chi fragment generation; this subunit has the helicase and 3' -&gt; 5' nuclease activities. The chain is ATP-dependent helicase/nuclease subunit A from Clostridium beijerinckii (strain ATCC 51743 / NCIMB 8052) (Clostridium acetobutylicum).